Here is a 286-residue protein sequence, read N- to C-terminus: Release factor glutamine methyltransferase (286 aa).

Residues 121-125 (GTGTG), Asp-144, Trp-172, and Asn-188 contribute to the S-adenosyl-L-methionine site. 188–191 (NPPY) serves as a coordination point for substrate.

The protein belongs to the protein N5-glutamine methyltransferase family. PrmC subfamily.

It carries out the reaction L-glutaminyl-[peptide chain release factor] + S-adenosyl-L-methionine = N(5)-methyl-L-glutaminyl-[peptide chain release factor] + S-adenosyl-L-homocysteine + H(+). Functionally, methylates the class 1 translation termination release factors RF1/PrfA and RF2/PrfB on the glutamine residue of the universally conserved GGQ motif. This chain is Release factor glutamine methyltransferase, found in Vibrio cholerae serotype O1 (strain ATCC 39315 / El Tor Inaba N16961).